The sequence spans 212 residues: Suppressor of cytokine signaling 1 (212 aa).

The tract at residues 1 to 55 (MVARNQVAADNAISPAAEPRRRSEPSSSSSSSSPAAPVRPRPCPAVPAPAPGDTH) is disordered. The span at 25–36 (PSSSSSSSSPAA) shows a compositional bias: low complexity. Residues 37 to 50 (PVRPRPCPAVPAPA) show a composition bias toward pro residues. The interval 56–67 (FRTFRSHSDYRR) is kinase inhibitory region (KIR). An extended SH2 subdomain (ESS) region spans residues 68 to 79 (ITRTSALLDACG). The 96-residue stretch at 80-175 (FYWGPLSVHG…PLRQRRVRPL (96 aa)) folds into the SH2 domain. Residues 162-211 (MLGAPLRQRRVRPLQELCRQRIVAAVGRENLARIPLNPVLRDYLSSFPFQ) form the SOCS box domain. An interaction with Elongin BC complex region spans residues 174–183 (PLQELCRQRI).

Belongs to the SOCS1 family. In terms of assembly, interacts with multiple activated proteins of the tyrosine kinase signaling pathway including JAK family kinases, TEC, KIT, GRB2 and VAV. Binding to JAKs is mediated through the KIR and SH2 domain to a phosphorylated tyrosine residue within the JAK JH1 domain. Binds the SH3 domain of GRB2 via diproline determinants in the N-terminus, and the N-terminal regulatory domain of VAV. Interacts with the Elongin BC complex (ELOB and ELOC). Component of an ECS CBC(SOCS1) E3 ubiquitin-protein ligase complex which contains Elongin BC, CUL5, RBX1 and SOCS1. Interacts (via SH2 domain and SOCS box) with TRIM8. Interacts with CUL2. Interacts with AXL and FGFR3. Interacts with INSR. Interacts with TRIM8. Interacts with DCUN1D1. Interacts with IFNGR1. In terms of tissue distribution, high expression in thymus. Lower expression in lung and spleen. Expressed in both Th1 and Th2 cells.

The protein localises to the nucleus. Its subcellular location is the cytoplasmic vesicle. Its pathway is protein modification; protein ubiquitination. Functionally, essential negative regulator of type I and type II interferon (IFN) signaling, as well as that of other cytokines, including IL2, IL4, IL6 and leukemia inhibitory factor (LIF). Downregulates cytokine signaling by inhibiting the JAK/STAT signaling pathway. Acts by binding to JAK proteins and to IFNGR1 and inhibiting their kinase activity. In vitro, suppresses Tec protein-tyrosine activity. Regulates IFN-gamma (IFNG)-mediated sensory neuron survival. Probable substrate recognition component of an ECS (Elongin BC-CUL2/5-SOCS-box protein) E3 ubiquitin ligase complex which mediates the ubiquitination and subsequent proteasomal degradation of target proteins. This Mus musculus (Mouse) protein is Suppressor of cytokine signaling 1.